Reading from the N-terminus, the 659-residue chain is Replication protein E1 (659 aa).

The segment at 30–57 (RTGDTVSSDEDEEEDGGEDLVDFIDDRP) is disordered. Residues 36 to 52 (SSDEDEEEDGGEDLVDF) are compositionally biased toward acidic residues. A Nuclear localization signal motif is present at residues 85-87 (KRK). Phosphoserine; by host occurs at positions 91, 95, 108, and 121. The short motif at 107-116 (LSPRLDAIKL) is the Nuclear export signal element. Positions 134–195 (GYGQTQVDTE…DGEESQTESV (62 aa)) are disordered. Residues 135–160 (YGQTQVDTESGPKQVQDICKTSQQDG) are compositionally biased toward polar residues. A DNA-binding region region spans residues 196–362 (QTDTTACGVL…QTVVGHALEE (167 aa)). The region spanning 461–611 (VEFIPFLCAL…FPLTTQGEPL (151 aa)) is the SF3 helicase domain. 487–494 (GPADTGKS) is a binding site for ATP. Lys568 is covalently cross-linked (Glycyl lysine isopeptide (Lys-Gly) (interchain with G-Cter in SUMO)). Residues 634 to 659 (DPEDEEDNGNTSEPFRCVPGQNTRTV) are disordered.

This sequence belongs to the papillomaviridae E1 protein family. Can form hexamers. Interacts with E2 protein; this interaction increases E1 DNA binding specificity. Interacts with host DNA polymerase subunit POLA2. Interacts with host single stranded DNA-binding protein RPA1. Interacts with host TOP1; this interaction stimulates the enzymatic activity of TOP1. Phosphorylated. Post-translationally, sumoylated.

It is found in the host nucleus. It catalyses the reaction Couples ATP hydrolysis with the unwinding of duplex DNA by translocating in the 3'-5' direction.. The catalysed reaction is ATP + H2O = ADP + phosphate + H(+). Its function is as follows. ATP-dependent DNA 3'-5' helicase required for initiation of viral DNA replication. It forms a complex with the viral E2 protein. The E1-E2 complex binds to the replication origin which contains binding sites for both proteins. During the initial step, a dimer of E1 interacts with a dimer of protein E2 leading to a complex that binds the viral origin of replication with high specificity. Then, a second dimer of E1 displaces the E2 dimer in an ATP-dependent manner to form the E1 tetramer. Following this, two E1 monomers are added to each half of the site, which results in the formation of two E1 trimers on the viral ori. Subsequently, two hexamers will be created. The double hexamer acts as a bi-directional helicase machinery and unwinds the viral DNA and then recruits the host DNA polymerase to start replication. This chain is Replication protein E1, found in Homo sapiens (Human).